A 1237-amino-acid polypeptide reads, in one-letter code: Anion exchange protein 2 (1237 aa).

The interval 1 to 237 (MSSAPRRPAS…SYNLQERRRI (237 aa)) is disordered. Residues 1–703 (MSSAPRRPAS…SDFRDALDPQ (703 aa)) are Cytoplasmic-facing. 2 stretches are compositionally biased toward basic and acidic residues: residues 37-49 (ELHR…RFEE) and 58-75 (GGEE…EYHR). Composition is skewed to basic residues over residues 76 to 85 (QSSHHIHHPL) and 94 to 110 (RRRK…RRRP). S113 is subject to Phosphoserine. Residues 122–133 (EEGEEDEEEANE) are compositionally biased toward acidic residues. The segment covering 137 to 151 (ARAPTEPSPASTPSS) has biased composition (low complexity). Phosphoserine occurs at positions 144, 170, and 172. A compositionally biased stretch (gly residues) spans 206–215 (TAGGDNGGAS). Position 239 is a phosphoserine (S239). The residue at position 253 (T253) is a Phosphothreonine. At K270 the chain carries N6-methyllysine. The tract at residues 281-316 (RRHLVRKNAKGSAQSSREGREPGPTPRSRPRAPHKP) is disordered. S439 carries the phosphoserine modification. The interval 445-464 (SLLGHHHGQGAESDPHVTEP) is disordered. Transmembrane regions (helical) follow at residues 704–727 (CVAA…GLLG), 733–770 (LIGV…LLVF), 790–812 (VWIG…SFLV), and 822–843 (IFAF…IKIF). Positions 704–1237 (CVAAVIFIYF…DEYNEMPMPV (534 aa)) are membrane (anion exchange). The Extracellular portion of the chain corresponds to 844–896 (QEHPLHGCSVSNSSETDSSENATWAGAGSTLGPANRSSAGQAGQGRPRGQPNT). 3 N-linked (GlcNAc...) asparagine glycosylation sites follow: N855, N864, and N878. A helical membrane pass occupies residues 897–914 (ALLSLVLMAGTFFIAFFL). At 915-929 (RKFKNSRFFPGRIRR) the chain is on the cytoplasmic side. The next 5 membrane-spanning stretches (helical) occupy residues 930 to 950 (VIGD…DYSI), 984 to 1006 (PFPV…LIFM), 1032 to 1053 (LLLI…LAAA), 1087 to 1132 (VTGL…IQFY), and 1159 to 1195 (MHLF…TVPL). C1169 carries the S-palmitoyl cysteine lipid modification.

Belongs to the anion exchanger (TC 2.A.31) family. In terms of tissue distribution, expressed in the ileum (at protein level).

The protein localises to the cell membrane. It is found in the apical cell membrane. It localises to the basolateral cell membrane. The enzyme catalyses hydrogencarbonate(in) + chloride(out) = hydrogencarbonate(out) + chloride(in). Functionally, sodium-independent anion exchanger which mediates the electroneutral exchange of chloride for bicarbonate ions across the cell membrane. Plays an important role in osteoclast differentiation and function. Regulates bone resorption and calpain-dependent actin cytoskeleton organization in osteoclasts via anion exchange-dependent control of pH. Essential for intracellular pH regulation in CD8(+) T-cells upon CD3 stimulation, modulating CD8(+) T-cell response. The protein is Anion exchange protein 2 (SLC4A2) of Oryctolagus cuniculus (Rabbit).